The primary structure comprises 169 residues: Nascent polypeptide-associated complex subunit alpha (169 aa).

The NAC-A/B domain occupies Asn-14–Leu-78. The interval Ile-85–Gly-128 is disordered. The 40-residue stretch at Leu-130–Lys-169 folds into the UBA domain.

It belongs to the NAC-alpha family. Part of the nascent polypeptide-associated complex (NAC), consisting of EGD2 and EGD1. NAC associates with ribosomes via EGD1.

The protein resides in the cytoplasm. It localises to the nucleus. Its function is as follows. Component of the nascent polypeptide-associated complex (NAC), a dynamic component of the ribosomal exit tunnel, protecting the emerging polypeptides from interaction with other cytoplasmic proteins to ensure appropriate nascent protein targeting. The NAC complex also promotes mitochondrial protein import by enhancing productive ribosome interactions with the outer mitochondrial membrane and blocks the inappropriate interaction of ribosomes translating non-secretory nascent polypeptides with translocation sites in the membrane of the endoplasmic reticulum. EGD2 may also be involved in transcription regulation. This chain is Nascent polypeptide-associated complex subunit alpha (EGD2), found in Vanderwaltozyma polyspora (strain ATCC 22028 / DSM 70294 / BCRC 21397 / CBS 2163 / NBRC 10782 / NRRL Y-8283 / UCD 57-17) (Kluyveromyces polysporus).